We begin with the raw amino-acid sequence, 852 residues long: Polyphosphate kinase (852 aa).

2 disordered regions span residues 1–36 (MATG…DRPI) and 58–82 (SHDP…SRRK). Positions 20-36 (VARDHPGCGPHRLDRPI) are enriched in basic and acidic residues. Polar residues predominate over residues 58–67 (SHDPAPSQSV). An ATP-binding site is contributed by N131. The segment at 251 to 303 (GDEIGPQRTPPPSDSLDNRVPSNLKRNSDTANQQPTPAENISAPEDGAEQTEP) is disordered. The insert stretch occupies residues 258–303 (RTPPPSDSLDNRVPSNLKRNSDTANQQPTPAENISAPEDGAEQTEP). Positions 270–289 (VPSNLKRNSDTANQQPTPAE) are enriched in polar residues. Positions 524 and 554 each coordinate Mg(2+). Residue H584 is the Phosphohistidine intermediate of the active site. Y617, R713, and H741 together coordinate ATP.

Belongs to the polyphosphate kinase 1 (PPK1) family. It depends on Mg(2+) as a cofactor. In terms of processing, an intermediate of this reaction is the autophosphorylated ppk in which a phosphate is covalently linked to a histidine residue through a N-P bond.

The catalysed reaction is [phosphate](n) + ATP = [phosphate](n+1) + ADP. Its function is as follows. Catalyzes the reversible transfer of the terminal phosphate of ATP to form a long-chain polyphosphate (polyP). The chain is Polyphosphate kinase from Rhodopirellula baltica (strain DSM 10527 / NCIMB 13988 / SH1).